The following is a 459-amino-acid chain: UDP-N-acetylmuramoylalanine--D-glutamate ligase (459 aa).

119-125 contributes to the ATP binding site; sequence GTNGKTT.

Belongs to the MurCDEF family.

It localises to the cytoplasm. The enzyme catalyses UDP-N-acetyl-alpha-D-muramoyl-L-alanine + D-glutamate + ATP = UDP-N-acetyl-alpha-D-muramoyl-L-alanyl-D-glutamate + ADP + phosphate + H(+). The protein operates within cell wall biogenesis; peptidoglycan biosynthesis. Its function is as follows. Cell wall formation. Catalyzes the addition of glutamate to the nucleotide precursor UDP-N-acetylmuramoyl-L-alanine (UMA). The sequence is that of UDP-N-acetylmuramoylalanine--D-glutamate ligase from Lacticaseibacillus casei (strain BL23) (Lactobacillus casei).